The following is a 339-amino-acid chain: Anthranilate phosphoribosyltransferase (339 aa).

5-phospho-alpha-D-ribose 1-diphosphate contacts are provided by residues Gly-79, 82 to 83, Ser-87, 89 to 92, 107 to 115, and Ser-119; these read GD, NIST, and KHGNRSISS. Gly-79 contributes to the anthranilate binding site. Residue Ser-91 coordinates Mg(2+). Asn-110 contacts anthranilate. Position 165 (Arg-165) interacts with anthranilate. Mg(2+) is bound by residues Asp-224 and Glu-225.

This sequence belongs to the anthranilate phosphoribosyltransferase family. Homodimer. The cofactor is Mg(2+).

It catalyses the reaction N-(5-phospho-beta-D-ribosyl)anthranilate + diphosphate = 5-phospho-alpha-D-ribose 1-diphosphate + anthranilate. The protein operates within amino-acid biosynthesis; L-tryptophan biosynthesis; L-tryptophan from chorismate: step 2/5. Its function is as follows. Catalyzes the transfer of the phosphoribosyl group of 5-phosphorylribose-1-pyrophosphate (PRPP) to anthranilate to yield N-(5'-phosphoribosyl)-anthranilate (PRA). The polypeptide is Anthranilate phosphoribosyltransferase (Listeria monocytogenes serotype 4a (strain HCC23)).